Here is a 708-residue protein sequence, read N- to C-terminus: Putative adhesion G protein-coupled receptor F2P (708 aa).

Residues Met1–Tyr451 lie on the Extracellular side of the membrane. Asn21, Asn220, Asn252, Asn260, Asn305, Asn313, and Asn358 each carry an N-linked (GlcNAc...) asparagine glycan. The GAIN-B domain occupies Met293–Glu442. Disulfide bonds link Cys394-Cys421 and Cys409-Cys423. The GPS stretch occupies residues Cys394–Glu442. Residues Val452 to Trp472 form a helical membrane-spanning segment. Topologically, residues Ser473–Cys487 are cytoplasmic. The chain crosses the membrane as a helical span at residues Ile488 to Leu508. Residues Ser509–Leu530 lie on the Extracellular side of the membrane. A helical membrane pass occupies residues Ser531 to Phe551. Topologically, residues His552–Ser557 are cytoplasmic. A helical membrane pass occupies residues Val558 to Thr578. Residues Val579–Ala606 lie on the Extracellular side of the membrane. Residues Phe607–Val627 form a helical membrane-spanning segment. Over Lys628–Lys650 the chain is Cytoplasmic. A helical transmembrane segment spans residues Asn651–Ile671. At Asp672–Arg674 the chain is on the extracellular side. The helical transmembrane segment at Ser675 to Ser695 threads the bilayer. At Asp696 to Leu708 the chain is on the cytoplasmic side.

Belongs to the G-protein coupled receptor 2 family. Adhesion G-protein coupled receptor (ADGR) subfamily. As to expression, high expression in kidney. Up-regulated in lung adenocarcinomas and prostate cancers.

It localises to the membrane. In terms of biological role, orphan receptor. This is Putative adhesion G protein-coupled receptor F2P from Homo sapiens (Human).